Consider the following 783-residue polypeptide: RNA exonuclease 5 (783 aa).

Residues 230–378 enclose the Exonuclease domain; it reads LFGLDCEMCL…EDARTTLELA (149 aa). RRM domains are found at residues 503-577 and 598-677; these read STVY…RPVT and GTIY…RHLH.

The polypeptide is RNA exonuclease 5 (REXO5) (Bos taurus (Bovine)).